The primary structure comprises 124 residues: TP53-target gene 3 protein (124 aa).

Positions Met-1–Ala-11 are enriched in polar residues. The disordered stretch occupies residues Met-1 to Ala-42.

Strongly expressed in testis. Weakly expressed in heart, placenta and skeletal muscle.

It is found in the cytoplasm. It localises to the nucleus. In terms of biological role, may play a significant role in p53/TP53-mediating signaling pathway. The polypeptide is TP53-target gene 3 protein (Homo sapiens (Human)).